The chain runs to 157 residues: RxLR effector protein PITG_04049 (157 aa).

A signal peptide spans 1–23 (MRLIAGVLAGFLVICEVTSTSES). Residues 51 to 65 (QFLRTDVVMNRGEER) carry the RxLR-dEER motif.

Belongs to the RxLR effector family.

The protein localises to the secreted. It is found in the host cytoplasm. Its subcellular location is the host nucleus. Its function is as follows. Effector that might be involved in host plant infection. This Phytophthora infestans (strain T30-4) (Potato late blight agent) protein is RxLR effector protein PITG_04049.